A 249-amino-acid chain; its full sequence is Probable transcriptional regulatory protein AB57_1731 (249 aa).

Belongs to the TACO1 family.

It is found in the cytoplasm. This Acinetobacter baumannii (strain AB0057) protein is Probable transcriptional regulatory protein AB57_1731.